Reading from the N-terminus, the 280-residue chain is 3-methyl-2-oxobutanoate hydroxymethyltransferase (280 aa).

Asp-60 and Asp-99 together coordinate Mg(2+). Residues 60 to 61, Asp-99, and Lys-129 each bind 3-methyl-2-oxobutanoate; that span reads DS. Glu-131 contributes to the Mg(2+) binding site. The Proton acceptor role is filled by Glu-198.

Belongs to the PanB family. In terms of assembly, homodecamer; pentamer of dimers. Requires Mg(2+) as cofactor.

The protein resides in the cytoplasm. The enzyme catalyses 3-methyl-2-oxobutanoate + (6R)-5,10-methylene-5,6,7,8-tetrahydrofolate + H2O = 2-dehydropantoate + (6S)-5,6,7,8-tetrahydrofolate. The protein operates within cofactor biosynthesis; (R)-pantothenate biosynthesis; (R)-pantoate from 3-methyl-2-oxobutanoate: step 1/2. Catalyzes the reversible reaction in which hydroxymethyl group from 5,10-methylenetetrahydrofolate is transferred onto alpha-ketoisovalerate to form ketopantoate. This chain is 3-methyl-2-oxobutanoate hydroxymethyltransferase, found in Thermobifida fusca (strain YX).